Reading from the N-terminus, the 201-residue chain is Cell division protein SepF (201 aa).

Basic and acidic residues predominate over residues valine 27–arginine 38. The tract at residues valine 27 to arginine 99 is disordered. 2 stretches are compositionally biased toward polar residues: residues glutamine 43–serine 54 and aspartate 82–isoleucine 92.

This sequence belongs to the SepF family. Homodimer. Interacts with FtsZ.

It is found in the cytoplasm. Cell division protein that is part of the divisome complex and is recruited early to the Z-ring. Probably stimulates Z-ring formation, perhaps through the cross-linking of FtsZ protofilaments. Its function overlaps with FtsA. This chain is Cell division protein SepF, found in Streptococcus agalactiae serotype III (strain NEM316).